The chain runs to 250 residues: Probable transcriptional regulatory protein Rxyl_1318 (250 aa).

It belongs to the TACO1 family.

It localises to the cytoplasm. The chain is Probable transcriptional regulatory protein Rxyl_1318 from Rubrobacter xylanophilus (strain DSM 9941 / JCM 11954 / NBRC 16129 / PRD-1).